A 196-amino-acid chain; its full sequence is MEARLVLGSSSERRKAVLESFRIPFICVSPDFDERSIVYSGDPFKYTKELAWNKANVVRSQGFSDALIITADTVVVYKGEVFNKPESEEHAVEMLRTLSGSSHSVITTLVLMQNEKVLSASENTQVSFIDIPPQHLKTYVRSFSSLKRCGGYCVQDGGGLIIKQIEGCVYNIQGLPIKTLNQLLMEFNISLWDYLV.

Asp-72 (proton acceptor) is an active-site residue.

This sequence belongs to the Maf family. YhdE subfamily. It depends on a divalent metal cation as a cofactor.

The protein localises to the cytoplasm. The enzyme catalyses dTTP + H2O = dTMP + diphosphate + H(+). It carries out the reaction UTP + H2O = UMP + diphosphate + H(+). Its function is as follows. Nucleoside triphosphate pyrophosphatase that hydrolyzes dTTP and UTP. May have a dual role in cell division arrest and in preventing the incorporation of modified nucleotides into cellular nucleic acids. This chain is dTTP/UTP pyrophosphatase, found in Chlamydia trachomatis serovar L2 (strain ATCC VR-902B / DSM 19102 / 434/Bu).